Consider the following 543-residue polypeptide: Chaperonin GroEL (543 aa).

Residues Thr29 to Pro32, Asp86 to Thr90, Gly413, and Asp504 contribute to the ATP site.

It belongs to the chaperonin (HSP60) family. As to quaternary structure, forms a cylinder of 14 subunits composed of two heptameric rings stacked back-to-back. Interacts with the co-chaperonin GroES.

It localises to the cytoplasm. The enzyme catalyses ATP + H2O + a folded polypeptide = ADP + phosphate + an unfolded polypeptide.. Its function is as follows. Together with its co-chaperonin GroES, plays an essential role in assisting protein folding. The GroEL-GroES system forms a nano-cage that allows encapsulation of the non-native substrate proteins and provides a physical environment optimized to promote and accelerate protein folding. The chain is Chaperonin GroEL from Mycoplasma genitalium (strain ATCC 33530 / DSM 19775 / NCTC 10195 / G37) (Mycoplasmoides genitalium).